The primary structure comprises 441 residues: Phenoloxidase-activating enzyme (441 aa).

The N-terminal stretch at 1 to 21 (MFLIWTFIVAVLAIQTKSVVA) is a signal peptide. Gln22 bears the Pyrrolidone carboxylic acid mark. Clip domains lie at 23–76 (SCRT…AVCC) and 77–127 (PCNA…SICC). 8 disulfides stabilise this stretch: Cys24–Cys75, Cys34–Cys65, Cys40–Cys76, Cys78–Cys126, Cys88–Cys117, Cys94–Cys127, Cys164–Cys305, and Cys203–Cys219. A Peptidase S1 domain is found at 174–440 (IVGGAPASID…YLPWIQNTIE (267 aa)). The Charge relay system role is filled by His218. The Ca(2+) site is built by Glu237, Asn239, Asn242, and Asp246. N-linked (GlcNAc...) asparagine glycosylation occurs at Asn239. Asp285 (charge relay system) is an active-site residue. A glycan (N-linked (GlcNAc...) asparagine) is linked at Asn334. Cystine bridges form between Cys356-Cys377 and Cys387-Cys416. Residue Ser391 is the Charge relay system of the active site.

This sequence belongs to the peptidase S1 family. CLIP subfamily. In the active form, heterodimer of a light chain and a heavy chain; disulfide-linked. In terms of processing, proteolytically cleaved for activation. Cleavage produces a light chain and a catalytic heavy chain which remains covalently associated probably through an interchain disulfide bond. Glycosylated.

Stabilized by calcium. Inhibited by di-isopropyl phosphorofluoridate (DFP), phenylmethanesulfonylfluoride (PMSF), p-nitrophenyl-p'-guanidinobenzonate (p-NPGB), p-chloromercuribenzoate (PCMB), ethylenediaminetetraacetic acid (EDTA), urea and CI-13c. Its function is as follows. Endopeptidase with selective post-Arg cleavage site. Activates prophenoloxidase. Has a probable role in the melanization process as part of the innate immune response. The polypeptide is Phenoloxidase-activating enzyme (Bombyx mori (Silk moth)).